The following is a 222-amino-acid chain: Ribonuclease 3 (222 aa).

The first 19 residues, 1–19, serve as a signal peptide directing secretion; sequence MKFFIFILALQQLYVQSFA. RNA is bound at residue Gln-30. The cysteines at positions 36 and 42 are disulfide-linked. RNA is bound by residues His-57, Phe-107, 110 to 111, and 114 to 115; these read HE and KH. His-57 (proton donor) is an active-site residue. 3 disulfides stabilise this stretch: Cys-72/Cys-118, Cys-178/Cys-213, and Cys-194/Cys-205. Residue Glu-111 is part of the active site. The active-site Proton acceptor is the His-115.

The protein belongs to the RNase T2 family.

The enzyme catalyses a ribonucleotidyl-ribonucleotide-RNA + H2O = a 3'-end 3'-phospho-ribonucleotide-RNA + a 5'-end dephospho-ribonucleoside-RNA + H(+). In terms of biological role, may remobilize phosphate, particularly when cells senesce or when phosphate becomes limiting. In Arabidopsis thaliana (Mouse-ear cress), this protein is Ribonuclease 3 (RNS3).